Consider the following 414-residue polypeptide: Relaxin-3 receptor 2 (414 aa).

Residues 1-43 (MATSNSSASLPTLFWVNGSGDSVLSTDGAAMPVQFLVLRIMVA) lie on the Extracellular side of the membrane. N-linked (GlcNAc...) asparagine glycosylation is found at Asn-5 and Asn-17. The helical transmembrane segment at 44–64 (LAYGLVGIIGLLGNLAVLWVL) threads the bilayer. Residues 65–77 (GNCGQRVPGLSSD) lie on the Cytoplasmic side of the membrane. A helical transmembrane segment spans residues 78–98 (TFVFSLALADLGLALTLPFWA). Residues 99–116 (TESAMDFHWPFGSALCKV) lie on the Extracellular side of the membrane. Residues Cys-114 and Cys-191 are joined by a disulfide bond. Residues 117-137 (VLTTTVLSIYASTFLITALSI) traverse the membrane as a helical segment. Over 138 to 155 (ARYWVVAMAVGPGSHLSV) the chain is Cytoplasmic. A helical transmembrane segment spans residues 156–176 (FWARVVTLAVWVAAALVTVPT). Residues 177 to 209 (AIFGAEVELWGVCLCLLRFPSRYWLGAYQLQRV) are Extracellular-facing. Residues 210–230 (VLAFIVPLGVITTSYLLLLAF) form a helical membrane-spanning segment. Topologically, residues 231–255 (LERQQRCRPRQWQDSRVVARSVRVL) are cytoplasmic. The helical transmembrane segment at 256–276 (VASFALCWVPNHVVTLWEILV) threads the bilayer. Over 277 to 293 (RFDLVPWDSTFYTFHTY) the chain is Extracellular. The helical transmembrane segment at 294–316 (ILPITTCLAHSNSCLNPVIYCLL) threads the bilayer. Over 317–414 (RREPQQVLVS…SQAAVSPGEV (98 aa)) the chain is Cytoplasmic.

This sequence belongs to the G-protein coupled receptor 1 family. As to expression, detected only in bone marrow.

The protein resides in the cell membrane. High affinity receptor for INSL5. Also acts as a receptor for RLN3/relaxin-3, as well as bradykinin and kallidin. Binding of the ligand inhibit cAMP accumulation. This Mus musculus (Mouse) protein is Relaxin-3 receptor 2 (Rxfp4).